The following is an 89-amino-acid chain: Small ribosomal subunit protein bS20 (89 aa).

Positions 1-21 are disordered; it reads MANSAQAKKRARQNVKARKHN. Over residues 7–21 the composition is skewed to basic residues; that stretch reads AKKRARQNVKARKHN.

Belongs to the bacterial ribosomal protein bS20 family.

Binds directly to 16S ribosomal RNA. This chain is Small ribosomal subunit protein bS20, found in Acinetobacter baylyi (strain ATCC 33305 / BD413 / ADP1).